The following is an 864-amino-acid chain: Structure-specific endonuclease subunit SLX4 (864 aa).

Disordered stretches follow at residues 1–21 (MTTQ…PVIP), 49–69 (LSTS…KTQG), 91–113 (TGTG…PGNA), 161–190 (ANQT…GNDH), 289–318 (LSDD…NRPK), 346–385 (TLLS…NEPP), 413–433 (ANGH…ISNS), and 625–767 (KAPN…VTSS). The segment covering 295–306 (SSITEDSESATS) has biased composition (polar residues). Positions 307-318 (KPRRVKAKNRPK) are enriched in basic residues. Residues 656–668 (QPNSISQKATTQV) are compositionally biased toward polar residues. A compositionally biased stretch (low complexity) spans 685-695 (VSSRRSTSTSK). Residues 743-767 (PESFNLPTTPLTIRSGKVPSTVTSS) are compositionally biased toward polar residues.

This sequence belongs to the SLX4 family. In terms of assembly, forms a heterodimer with SLX1. In terms of processing, phosphorylated in response to DNA damage.

The protein resides in the nucleus. Functionally, regulatory subunit of the SLX1-SLX4 structure-specific endonuclease that resolves DNA secondary structures generated during DNA repair and recombination. Has endonuclease activity towards branched DNA substrates, introducing single-strand cuts in duplex DNA close to junctions with ss-DNA. The sequence is that of Structure-specific endonuclease subunit SLX4 from Paracoccidioides lutzii (strain ATCC MYA-826 / Pb01) (Paracoccidioides brasiliensis).